Reading from the N-terminus, the 955-residue chain is Leucine--tRNA ligase (955 aa).

Positions 51 to 61 (PYLNGVLHAGH) match the 'HIGH' region motif. Positions 647–651 (KLSKS) match the 'KMSKS' region motif. Lys-650 serves as a coordination point for ATP.

It belongs to the class-I aminoacyl-tRNA synthetase family.

It is found in the cytoplasm. The catalysed reaction is tRNA(Leu) + L-leucine + ATP = L-leucyl-tRNA(Leu) + AMP + diphosphate. This Methanococcus maripaludis (strain C5 / ATCC BAA-1333) protein is Leucine--tRNA ligase.